A 338-amino-acid chain; its full sequence is Lipoate-protein ligase A (338 aa).

The 188-residue stretch at 29 to 216 (PATQRVLFLW…AFFAHYGERV (188 aa)) folds into the BPL/LPL catalytic domain. ATP-binding positions include Arg71, 76–79 (GAVF), and Lys134. Residue Lys134 coordinates (R)-lipoate.

This sequence belongs to the LplA family. In terms of assembly, monomer.

The protein localises to the cytoplasm. It carries out the reaction L-lysyl-[lipoyl-carrier protein] + (R)-lipoate + ATP = N(6)-[(R)-lipoyl]-L-lysyl-[lipoyl-carrier protein] + AMP + diphosphate + H(+). The protein operates within protein modification; protein lipoylation via exogenous pathway; protein N(6)-(lipoyl)lysine from lipoate: step 1/2. It functions in the pathway protein modification; protein lipoylation via exogenous pathway; protein N(6)-(lipoyl)lysine from lipoate: step 2/2. In terms of biological role, catalyzes both the ATP-dependent activation of exogenously supplied lipoate to lipoyl-AMP and the transfer of the activated lipoyl onto the lipoyl domains of lipoate-dependent enzymes. The sequence is that of Lipoate-protein ligase A from Salmonella arizonae (strain ATCC BAA-731 / CDC346-86 / RSK2980).